The primary structure comprises 524 residues: Phosphoenolpyruvate carboxykinase (ATP) (524 aa).

Arginine 52, tyrosine 188, and lysine 194 together coordinate substrate. ATP-binding positions include lysine 194, histidine 213, and 229-237 (GLSGTGKTT). 2 residues coordinate Mn(2+): lysine 194 and histidine 213. Mn(2+) is bound at residue aspartate 250. ATP is bound by residues glutamate 278, arginine 314, and threonine 439. Arginine 314 contributes to the substrate binding site.

Belongs to the phosphoenolpyruvate carboxykinase (ATP) family. Mn(2+) is required as a cofactor.

The protein localises to the cytoplasm. It carries out the reaction oxaloacetate + ATP = phosphoenolpyruvate + ADP + CO2. It participates in carbohydrate biosynthesis; gluconeogenesis. Involved in the gluconeogenesis. Catalyzes the conversion of oxaloacetate (OAA) to phosphoenolpyruvate (PEP) through direct phosphoryl transfer between the nucleoside triphosphate and OAA. This Campylobacter jejuni (strain RM1221) protein is Phosphoenolpyruvate carboxykinase (ATP).